Reading from the N-terminus, the 436-residue chain is Phaseolin, alpha-type (436 aa).

The N-terminal stretch at 1–24 is a signal peptide; the sequence is MMRARVPLLLLGILFLASLSASFA. A disordered region spans residues 233-257; sequence LSKHAKSSSRKSHSKQDNTIGNEFG. Residues 236-245 are compositionally biased toward basic residues; sequence HAKSSSRKSH. The 152-residue stretch at 245-396 folds into the Cupin type-1 domain; that stretch reads HSKQDNTIGN…TFSGSGEEVM (152 aa). Asn-258 carries N-linked (GlcNAc...) (complex) asparagine; alternate glycosylation. N-linked (GlcNAc...) (high mannose) asparagine; alternate glycosylation is present at Asn-258. Asn-347 carries an N-linked (GlcNAc...) (high mannose) asparagine glycan. A disordered region spans residues 411-436; that stretch reads HHHQQEQQKGSHQQEQQKGRKGAFVY. Positions 417–426 are enriched in low complexity; it reads QQKGSHQQEQ.

The protein belongs to the 7S seed storage protein family. Homotrimer. N-glycosylated; glycans consist in Man9(GlcNAc)2 and Man7(GlcNAc)2 when dually glycosylated at Asn-258 and Asn-347, whereas it consists in Xyl-Man3(GlcNAc)2 when solely glycosylated at Asn-258.

It localises to the vacuole. The protein localises to the aleurone grain. Its function is as follows. Major seed storage protein. The polypeptide is Phaseolin, alpha-type (Phaseolus vulgaris (Kidney bean)).